The sequence spans 117 residues: Minor capsid protein p17 (117 aa).

N12 is a glycosylation site (N-linked (GlcNAc...) asparagine; by host). Residues 39–59 (AIILGILILLVIILIVVAIVY) traverse the membrane as a helical segment. N61 and N98 each carry an N-linked (GlcNAc...) asparagine; by host glycan. The segment at 97–117 (KNSTTQQHIPSDEQLAELAHS) is disordered.

This sequence belongs to the asfivirus minor capsid protein p17 family. In terms of assembly, interacts with the minor capsid protein M1249L and with the hexon capsid protein p72 capsomers; these interactions form a rigid zipper structure that stabilizes the capsomers. Interacts with host STING1.

The protein localises to the virion membrane. Its subcellular location is the host endoplasmic reticulum membrane. In terms of biological role, together with the penton and the other minor capsid proteins (M1249L, p49), forms a complicated network immediately below the outer capsid shell, stabilizing the whole capsid. Three copies of p17 encircle each p72 capsomer in the inner capsid shell, anchoring p72 capsomers on the inner membrane. Required for the assembly of the capsid and icosahedral morphogenesis. Additionally, inhibits the host cGAS-STING pathway through its interaction with STING1 and subsequent interference of the recruitment of downstream components TBK1 and IKBKE. This Ornithodoros (relapsing fever ticks) protein is Minor capsid protein p17.